Here is a 594-residue protein sequence, read N- to C-terminus: AT-rich interactive domain-containing protein 5A (594 aa).

The disordered stretch occupies residues 1 to 56 (MAAPVKGNRKQSTEGDALDPPASPKPAGKQNGIQNPISLEDSPEAGGEREEEQERE). An interaction with SOX9 region spans residues 1–300 (MAAPVKGNRK…AVHLPESPQS (300 aa)). Phosphoserine is present on Ser-23. Residues 55–147 (REEEQAFLVS…LVLPYVRHLK (93 aa)) form the ARID domain. Glycyl lysine isopeptide (Lys-Gly) (interchain with G-Cter in ubiquitin) cross-links involve residues Lys-85 and Lys-94. The interval 146-223 (LKGEDDKPLP…NSTEQQGLAS (78 aa)) is disordered. Over residues 165 to 189 (MAKENRGDDGATERPKKAKEERRMD) the composition is skewed to basic and acidic residues. Ser-256 and Ser-289 each carry phosphoserine. 2 disordered regions span residues 281–331 (RHGA…EAQA) and 426–454 (AESP…GAAH). Residues 297–306 (SPQSPKGLTE) show a composition bias toward polar residues. 2 positions are modified to phosphoserine: Ser-438 and Ser-463.

In terms of assembly, interacts with SOX9. Interacts with ESR1. Interacts with RORC. Phosphorylated by MAPK14 on serine residues involving a TLR4 signaling pathway upon lipopolysaccharide (LPS) stimulation leading to its ubiquitination and proteasomal degradation. In terms of processing, ubiquitinated leading to proteasomal degradation; involving WWP1 linked to MAPK14-mediated phosphorylation upon LPS stimulation.

It localises to the nucleus. In terms of biological role, DNA-binding protein that may regulate transcription and act as a repressor by binding to AT-rich stretches in the promoter region of target genes. May positively regulate chondrocyte-specific transcription such as of COL2A1 in collaboration with SOX9 and positively regulate histone H3 acetylation at chondrocyte-specific genes. May stimulate early-stage chondrocyte differentiation and inhibit later stage differention. Can repress ESR1-mediated transcriptional activation; proposed to act as corepressor for selective nuclear hormone receptors. As an RNA-binding protein, involved in the regulation of inflammatory response by stabilizing selective inflammation-related mRNAs, such as STAT3 and TBX21. Also stabilizes IL6 mRNA. Binds to stem loop structures located in the 3'UTRs of IL6, STAT3 and TBX21 mRNAs; at least for STAT3 prevents binding of ZC3H12A to the mRNA stem loop structure thus inhibiting its degradation activity. Contributes to elevated IL6 levels possibly implicated in autoimmunity processes. IL6-dependent stabilization of STAT3 mRNA may promote differentiation of naive CD4+ T-cells into T-helper Th17 cells. In CD4+ T-cells may also inhibit RORC-induced Th17 cell differentiation independently of IL6 signaling. Stabilization of TBX21 mRNA contributes to elevated interferon-gamma secretion in Th1 cells possibly implicated in the establishment of septic shock. Stabilizes TNFRSF4/OX40 mRNA by binding to the conserved stem loop structure in its 3'UTR; thereby competing with the mRNA-destabilizing functions of RC3H1 and endoribonuclease ZC3H12A. This Homo sapiens (Human) protein is AT-rich interactive domain-containing protein 5A (ARID5A).